We begin with the raw amino-acid sequence, 789 residues long: Phenylalanine--tRNA ligase beta subunit (789 aa).

The region spanning alanine 39–valine 149 is the tRNA-binding domain. Residues serine 399–serine 471 form the B5 domain. Residues aspartate 449, aspartate 455, and aspartate 459 each contribute to the Mg(2+) site. Residues serine 696–arginine 788 enclose the FDX-ACB domain.

It belongs to the phenylalanyl-tRNA synthetase beta subunit family. Type 1 subfamily. Tetramer of two alpha and two beta subunits. It depends on Mg(2+) as a cofactor.

The protein localises to the cytoplasm. It catalyses the reaction tRNA(Phe) + L-phenylalanine + ATP = L-phenylalanyl-tRNA(Phe) + AMP + diphosphate + H(+). This Zymomonas mobilis subsp. mobilis (strain ATCC 31821 / ZM4 / CP4) protein is Phenylalanine--tRNA ligase beta subunit.